The sequence spans 236 residues: Phosphoribosylaminoimidazole-succinocarboxamide synthase (236 aa).

It belongs to the SAICAR synthetase family.

It carries out the reaction 5-amino-1-(5-phospho-D-ribosyl)imidazole-4-carboxylate + L-aspartate + ATP = (2S)-2-[5-amino-1-(5-phospho-beta-D-ribosyl)imidazole-4-carboxamido]succinate + ADP + phosphate + 2 H(+). It participates in purine metabolism; IMP biosynthesis via de novo pathway; 5-amino-1-(5-phospho-D-ribosyl)imidazole-4-carboxamide from 5-amino-1-(5-phospho-D-ribosyl)imidazole-4-carboxylate: step 1/2. The sequence is that of Phosphoribosylaminoimidazole-succinocarboxamide synthase from Chlorobium phaeobacteroides (strain DSM 266 / SMG 266 / 2430).